Reading from the N-terminus, the 486-residue chain is Ribosomal RNA small subunit methyltransferase F (486 aa).

S-adenosyl-L-methionine-binding positions include 124 to 130, Glu-148, Asp-175, and Asp-193; that span reads ASAPGSK. Cys-246 serves as the catalytic Nucleophile.

The protein belongs to the class I-like SAM-binding methyltransferase superfamily. RsmB/NOP family.

The protein resides in the cytoplasm. It catalyses the reaction cytidine(1407) in 16S rRNA + S-adenosyl-L-methionine = 5-methylcytidine(1407) in 16S rRNA + S-adenosyl-L-homocysteine + H(+). Specifically methylates the cytosine at position 1407 (m5C1407) of 16S rRNA. This Shewanella putrefaciens (strain CN-32 / ATCC BAA-453) protein is Ribosomal RNA small subunit methyltransferase F.